The chain runs to 95 residues: Large ribosomal subunit protein uL23 (95 aa).

Belongs to the universal ribosomal protein uL23 family. Part of the 50S ribosomal subunit. Contacts protein L29, and trigger factor when it is bound to the ribosome.

In terms of biological role, one of the early assembly proteins it binds 23S rRNA. One of the proteins that surrounds the polypeptide exit tunnel on the outside of the ribosome. Forms the main docking site for trigger factor binding to the ribosome. The protein is Large ribosomal subunit protein uL23 of Lawsonia intracellularis (strain PHE/MN1-00).